Consider the following 135-residue polypeptide: Small ribosomal subunit protein bS6 (135 aa).

A compositionally biased stretch (polar residues) spans 99 to 120; sequence QHSSLGRSTAPANPMASNTPRT. The segment at 99–135 is disordered; the sequence is QHSSLGRSTAPANPMASNTPRTEGQEQAKTEPQTAPA.

The protein belongs to the bacterial ribosomal protein bS6 family.

In terms of biological role, binds together with bS18 to 16S ribosomal RNA. This chain is Small ribosomal subunit protein bS6, found in Synechococcus sp. (strain RCC307).